The primary structure comprises 852 residues: Pentatricopeptide repeat-containing protein At5g02830, chloroplastic (852 aa).

The N-terminal 25 residues, 1–25 (MRDFVIVFGSSSAITNPHHHHRRCY), are a transit peptide targeting the chloroplast. Residues 17–60 (PHHHHRRCYATAPESNRKTKSNSSFTKLLPSLPQQHSPSPASVS) are disordered. The span at 44–58 (LLPSLPQQHSPSPAS) shows a compositional bias: low complexity. PPR repeat units follow at residues 334–364 (DMTS…AKRM), 373–407 (DAFT…GVTP), 408–442 (NTHT…GCEP), 443–477 (NSQC…SVNE), 525–557 (TTAT…GLSP), 558–592 (NQIT…GTRP), 593–627 (DVVA…QIKP), and 628–665 (NWVT…GYKP).

It belongs to the PPR family. P subfamily.

It is found in the plastid. Its subcellular location is the chloroplast. This Arabidopsis thaliana (Mouse-ear cress) protein is Pentatricopeptide repeat-containing protein At5g02830, chloroplastic.